A 91-amino-acid polypeptide reads, in one-letter code: Small ribosomal subunit protein uS19 (91 aa).

Belongs to the universal ribosomal protein uS19 family.

Protein S19 forms a complex with S13 that binds strongly to the 16S ribosomal RNA. This chain is Small ribosomal subunit protein uS19, found in Neorickettsia sennetsu (strain ATCC VR-367 / Miyayama) (Ehrlichia sennetsu).